Here is a 67-residue protein sequence, read N- to C-terminus: Large ribosomal subunit protein uL29 (67 aa).

This sequence belongs to the universal ribosomal protein uL29 family.

The polypeptide is Large ribosomal subunit protein uL29 (Wolbachia pipientis subsp. Culex pipiens (strain wPip)).